The sequence spans 822 residues: A disintegrin and metallopeptidase domain 3 (822 aa).

The first 16 residues, 1 to 16 (MLPLFLVLSYLGQVIA), serve as a signal peptide directing secretion. The Peptidase M12B domain maps to 187-384 (RILRIKIIMD…PELDCLRNTS (198 aa)). 7 disulfides stabilise this stretch: Cys-296-Cys-379, Cys-338-Cys-363, Cys-340-Cys-345, Cys-456-Cys-476, Cys-623-Cys-635, Cys-629-Cys-641, and Cys-643-Cys-652. The Disintegrin domain maps to 395–484 (GSYCGNHLLE…GCAPDTKAAD (90 aa)). The EGF-like domain maps to 619-653 (GTRECEADDKCQGHGICNNLNNCQCESGFAPPECD). Residues 689–709 (VLLISFYILLPFLVVLAFMAV) form a helical membrane-spanning segment.

Interacts with LY6K. Interacts with TEX101. Initially synthesized as a 110-kDa precursor in round spermatids, and the precursor is then processed into a 42-kDa mature protein during the sperm transport into and/or once in the epididymis. Expressed in sperm (at protein level).

It localises to the cell membrane. Its function is as follows. Involved in fertilization by controlling sperm migration into the oviduct. Promotes the binding of sperm to the oocyte zona pellucida. This chain is A disintegrin and metallopeptidase domain 3, found in Mus musculus (Mouse).